The primary structure comprises 384 residues: NADP-dependent alcohol dehydrogenase 3 (384 aa).

The protein belongs to the iron-containing alcohol dehydrogenase family.

The catalysed reaction is a primary alcohol + NADP(+) = an aldehyde + NADPH + H(+). Functionally, has NADP-dependent alcohol dehydrogenase activity. This Entamoeba histolytica (strain ATCC 30459 / HM-1:IMSS / ABRM) protein is NADP-dependent alcohol dehydrogenase 3.